Here is a 484-residue protein sequence, read N- to C-terminus: MPSEPSAPLPQPLPPDGGWGWVVVCASFISIGFSYAFPKAVTVFFKDIQEIFNTTSSQIAWISSIMLAVMYAGGPISSVLVNNYGSRPVVIVGGLLCCIGMILASYSNSVIELYLTVGFIGGLGLAFNLQPALTIIGKYFYRRRPLANGCAMAGSPVFLSTLAPFNQYLFNNYGWKGSFLILGGIFLHSCVAGCLMRPVGPSPNTKKSKSKVGSRHDSTLKKASKVSTAQKVNRFLDFSLFMHRGFLIYLSGNVILFLGIFAPIIFLAQYAKHIGVDDYNSAFLLSVMAFIDMFARPSVGLIANTSLIRPRIQYLFSSAIIFTGICHLLCPLATTYSALVVYVVFFGLGFGSISSLLFECLMDIVGATRFSSAVGLTTIVECCPVLFGPPLAGKLLDITGEYKYLYIASGTVVLVSGTYLLIGNAINYRLLDKERKREKAKKKKSASHASREMEALNRSKQDEVTVKASNAHNPPSDRDKESNI.

At 1–16 (MPSEPSAPLPQPLPPD) the chain is on the cytoplasmic side. Residues 17–37 (GGWGWVVVCASFISIGFSYAF) form a helical membrane-spanning segment. Topologically, residues 38-60 (PKAVTVFFKDIQEIFNTTSSQIA) are extracellular. The helical transmembrane segment at 61–81 (WISSIMLAVMYAGGPISSVLV) threads the bilayer. Topologically, residues 82 to 90 (NNYGSRPVV) are cytoplasmic. Residues 91-111 (IVGGLLCCIGMILASYSNSVI) traverse the membrane as a helical segment. Residues 112–116 (ELYLT) are Extracellular-facing. Residues 117–137 (VGFIGGLGLAFNLQPALTIIG) traverse the membrane as a helical segment. Over 138-149 (KYFYRRRPLANG) the chain is Cytoplasmic. The helical transmembrane segment at 150–170 (CAMAGSPVFLSTLAPFNQYLF) threads the bilayer. Residues 171-174 (NNYG) lie on the Extracellular side of the membrane. Residues 175-195 (WKGSFLILGGIFLHSCVAGCL) traverse the membrane as a helical segment. Residues 196-245 (MRPVGPSPNTKKSKSKVGSRHDSTLKKASKVSTAQKVNRFLDFSLFMHRG) are Cytoplasmic-facing. The chain crosses the membrane as a helical span at residues 246–266 (FLIYLSGNVILFLGIFAPIIF). At 267-281 (LAQYAKHIGVDDYNS) the chain is on the extracellular side. Residues 282 to 302 (AFLLSVMAFIDMFARPSVGLI) form a helical membrane-spanning segment. At 303–311 (ANTSLIRPR) the chain is on the cytoplasmic side. Residues 312–332 (IQYLFSSAIIFTGICHLLCPL) form a helical membrane-spanning segment. Residues 333-337 (ATTYS) lie on the Extracellular side of the membrane. A helical transmembrane segment spans residues 338 to 358 (ALVVYVVFFGLGFGSISSLLF). Residues 359 to 372 (ECLMDIVGATRFSS) are Cytoplasmic-facing. Residues 373 to 393 (AVGLTTIVECCPVLFGPPLAG) form a helical membrane-spanning segment. Over 394–405 (KLLDITGEYKYL) the chain is Extracellular. The helical transmembrane segment at 406–426 (YIASGTVVLVSGTYLLIGNAI) threads the bilayer. Topologically, residues 427–484 (NYRLLDKERKREKAKKKKSASHASREMEALNRSKQDEVTVKASNAHNPPSDRDKESNI) are cytoplasmic. The segment at 438-484 (EKAKKKKSASHASREMEALNRSKQDEVTVKASNAHNPPSDRDKESNI) is disordered. 2 stretches are compositionally biased toward basic and acidic residues: residues 449 to 465 (ASREMEALNRSKQDEVT) and 475 to 484 (PSDRDKESNI).

The protein belongs to the major facilitator superfamily. Monocarboxylate porter (TC 2.A.1.13) family. Homodimer. Interacts with GRID2IP. Interacts with EMB; interaction mediates SLC16A7 targeting to the plasma membrane. Interacts with isoform 2 of BSG. Detected in testis and in spermatozoa (at protein level).

The protein localises to the cell membrane. It localises to the cytoplasm. Its subcellular location is the basolateral cell membrane. The catalysed reaction is (S)-lactate(in) + H(+)(in) = (S)-lactate(out) + H(+)(out). The enzyme catalyses 3-methyl-2-oxobutanoate(out) + H(+)(out) = 3-methyl-2-oxobutanoate(in) + H(+)(in). It catalyses the reaction acetoacetate(out) + H(+)(out) = acetoacetate(in) + H(+)(in). It carries out the reaction (R)-3-hydroxybutanoate(out) + H(+)(out) = (R)-3-hydroxybutanoate(in) + H(+)(in). The catalysed reaction is 4-methyl-2-oxopentanoate(out) + H(+)(out) = 4-methyl-2-oxopentanoate(in) + H(+)(in). The enzyme catalyses pyruvate(out) + H(+)(out) = pyruvate(in) + H(+)(in). It catalyses the reaction (S)-3-hydroxybutanoate(out) + H(+)(out) = (S)-3-hydroxybutanoate(in) + H(+)(in). With respect to regulation, transport activity exhibits steep dependence on substrate concentration. Substrate concentration sensitivity of SLC16A7 arises from the strong inter-subunit cooperativity of the SLC16A7 dimer during transport. Inhibited by AR-C155858. Its function is as follows. Proton-coupled monocarboxylate symporter. Catalyzes the rapid transport across the plasma membrane of monocarboxylates such as L-lactate, pyruvate and ketone bodies, acetoacetate, beta-hydroxybutyrate and acetate. Dimerization is functionally required and both subunits work cooperatively in transporting substrate. The chain is Monocarboxylate transporter 2 (Slc16a7) from Mus musculus (Mouse).